Consider the following 329-residue polypeptide: Sex comb on midleg-like protein 1 (329 aa).

The interval 125-194 (NEVHESFSYP…SDFSEHNYQP (70 aa)) is disordered. A Phosphoserine modification is found at S138. Basic and acidic residues predominate over residues 159–168 (FRMEEYQRAE). S238 bears the Phosphoserine mark. Positions 258-325 (WSVEAVVLFL…YYIDRLKQGK (68 aa)) constitute an SAM domain.

The protein belongs to the SCM family. In terms of tissue distribution, highly expressed in testis and pancreas. Preferentially expressed in the germ stem cells of testis.

It localises to the nucleus. Putative Polycomb group (PcG) protein. PcG proteins act by forming multiprotein complexes, which are required to maintain the transcriptionally repressive state of homeotic genes throughout development. May be involved in spermatogenesis during sexual maturation. The sequence is that of Sex comb on midleg-like protein 1 (SCML1) from Macaca mulatta (Rhesus macaque).